Here is a 185-residue protein sequence, read N- to C-terminus: DAN domain family member 5 (185 aa).

A signal peptide spans 1–23 (MFRSQFTTLLGLFSGAWLPTGSG). Residue Asn-39 is glycosylated (N-linked (GlcNAc...) asparagine). 4 cysteine pairs are disulfide-bonded: Cys-97–Cys-144, Cys-111–Cys-158, Cys-121–Cys-179, and Cys-125–Cys-181. The CTCK domain maps to 97–182 (CKALSFVQVI…TVLVQKCQCR (86 aa)).

Belongs to the DAN family. As to expression, expressed throughout the neural retina and in the photoreceptor nuclear layer. In the retina, widely expressed in inner nuclear layer, as well as in the ganglion cell layer.

The protein resides in the secreted. In terms of biological role, antagonist of the extracellular signaling protein NODAL, which is required for correct left-right patterning during embryonic development. Antagonist of BMP4 signaling. Antagonist of TGF-beta signaling. Independently of its role in left-right axis establishment, plays a role during heart development, possibly through the regulation of TGF-beta/Nodal signaling pathway. Displays anti-angiogenic activity by inhibiting endothelial sprouting, migration, and proliferation. Once internalized by endothelial cells, may alter their redox and glycolytic balance. This chain is DAN domain family member 5 (Dand5), found in Mus musculus (Mouse).